Here is a 229-residue protein sequence, read N- to C-terminus: Urease accessory protein UreF (229 aa).

It belongs to the UreF family. As to quaternary structure, ureD, UreF and UreG form a complex that acts as a GTP-hydrolysis-dependent molecular chaperone, activating the urease apoprotein by helping to assemble the nickel containing metallocenter of UreC. The UreE protein probably delivers the nickel.

The protein localises to the cytoplasm. Required for maturation of urease via the functional incorporation of the urease nickel metallocenter. The protein is Urease accessory protein UreF of Staphylococcus aureus (strain USA300).